Here is a 332-residue protein sequence, read N- to C-terminus: UDP-3-O-acylglucosamine N-acyltransferase (332 aa).

His231 acts as the Proton acceptor in catalysis.

Belongs to the transferase hexapeptide repeat family. LpxD subfamily. In terms of assembly, homotrimer.

The catalysed reaction is a UDP-3-O-[(3R)-3-hydroxyacyl]-alpha-D-glucosamine + a (3R)-hydroxyacyl-[ACP] = a UDP-2-N,3-O-bis[(3R)-3-hydroxyacyl]-alpha-D-glucosamine + holo-[ACP] + H(+). It participates in bacterial outer membrane biogenesis; LPS lipid A biosynthesis. Catalyzes the N-acylation of UDP-3-O-acylglucosamine using 3-hydroxyacyl-ACP as the acyl donor. Is involved in the biosynthesis of lipid A, a phosphorylated glycolipid that anchors the lipopolysaccharide to the outer membrane of the cell. This is UDP-3-O-acylglucosamine N-acyltransferase from Vesicomyosocius okutanii subsp. Calyptogena okutanii (strain HA).